We begin with the raw amino-acid sequence, 167 residues long: uncharacterized protein (167 aa).

The protein localises to the virion. This is an uncharacterized protein from Acanthamoeba polyphaga (Amoeba).